Here is a 482-residue protein sequence, read N- to C-terminus: Rhamnulokinase (482 aa).

An ATP-binding site is contributed by 13-17 (ASSGR). Substrate contacts are provided by residues G83 and 232-234 (HDT). Catalysis depends on D233, which acts as the Proton acceptor. T255 serves as a coordination point for ATP. N292 is a substrate binding site. Residue N300 participates in ATP binding. C349 and C366 form a disulfide bridge. An ATP-binding site is contributed by G398. Residues C409 and C413 are joined by a disulfide bond.

Belongs to the rhamnulokinase family. The cofactor is Mg(2+).

It catalyses the reaction L-rhamnulose + ATP = L-rhamnulose 1-phosphate + ADP + H(+). It participates in carbohydrate degradation; L-rhamnose degradation; glycerone phosphate from L-rhamnose: step 2/3. Involved in the catabolism of L-rhamnose (6-deoxy-L-mannose). Catalyzes the transfer of the gamma-phosphate group from ATP to the 1-hydroxyl group of L-rhamnulose to yield L-rhamnulose 1-phosphate. This Mannheimia succiniciproducens (strain KCTC 0769BP / MBEL55E) protein is Rhamnulokinase.